The following is a 49-amino-acid chain: Large ribosomal subunit protein bL33A (49 aa).

Belongs to the bacterial ribosomal protein bL33 family.

The polypeptide is Large ribosomal subunit protein bL33A (Streptococcus pneumoniae (strain Hungary19A-6)).